Consider the following 3902-residue polypeptide: Hybrid PKS-NRPS synthetase pynA (3902 aa).

The tract at residues 1-25 is disordered; it reads MDTPLSSSEISPRFSNTVPSSVSSM. Positions 29-441 constitute a Ketosynthase family 3 (KS3) domain; the sequence is ADPSVIVGLA…GTNAHVILDA (413 aa). Active-site for beta-ketoacyl synthase activity residues include cysteine 201, histidine 324, and histidine 362. Residues 555-868 are malonyl-CoA:ACP transacylase (MAT) domain; it reads VFTGQGAQWF…PYLASLTRGV (314 aa). Serine 647 acts as the For malonyltransferase activity in catalysis. Residues 945 to 1080 form an N-terminal hotdog fold region; it reads HSILGARMPG…GLVSVETNAL (136 aa). The segment at 945-1256 is dehydratase (DH) domain; that stretch reads HSILGARMPG…LEVTALGSDK (312 aa). Residues 945–1258 enclose the PKS/mFAS DH domain; that stretch reads HSILGARMPG…VTALGSDKTD (314 aa). Histidine 977 functions as the Proton acceptor; for dehydratase activity in the catalytic mechanism. Positions 1100–1258 are C-terminal hotdog fold; that stretch reads QESIPAETLY…VTALGSDKTD (159 aa). Aspartate 1164 (proton donor; for dehydratase activity) is an active-site residue. The interval 1629-1945 is enoyl reductase (ER) domain; sequence GLLETLVFED…MGKHTGKVVL (317 aa). The segment at 1971–2143 is ketoreductase (KR) domain; sequence TYLLVGGLGG…AGTTMNCGMI (173 aa). A Carrier 1 domain is found at 2251–2328; sequence ERTTLVLSAF…ALVTKASGLI (78 aa). Serine 2288 carries the O-(pantetheine 4'-phosphoryl)serine modification. The segment covering 2337 to 2350 has biased composition (basic and acidic residues); that stretch reads KAENVDNEGAKGNE. The segment at 2337-2364 is disordered; that stretch reads KAENVDNEGAKGNEDQEVETQQGQLNQP. Positions 2374-2816 are condensation (C) domain 7; the sequence is VPMSSFQQRL…AEVNLCGALE (443 aa). An adenylation (A) domain 8 region spans residues 2836–3248; sequence SVGVCQRIME…NGLLTFKGRI (413 aa). The Carrier 2 domain occupies 3391–3467; the sequence is GDDAEILQGV…AIAGMIQKQL (77 aa). At serine 3427 the chain carries O-(pantetheine 4'-phosphoryl)serine. Residues 3515–3774 form a thioesterase (TE) domain region; that stretch reads LTGIDTFIGL…VDFLPVDALT (260 aa).

In the C-terminal section; belongs to the NRP synthetase family.

Its pathway is secondary metabolite biosynthesis. Functionally, hybrid PKS-NRPS synthetase; part of the gene cluster that mediates the biosynthesis of pyranonigrins, a family of antioxidative compounds. The first step of pyranonigrins biosynthesis is performed by the hybrid PKS-NRPS synthetase that condenses 6 malonyl-CoA units to an acetyl starter unit, to form a 1,3,5-trioxotetradecane-6,8-dienyl-ACP. The enoyl reductase (ER) domain of pynA is likely to be functional during the first two rounds of polyketide chain extension, to generate the saturated C-C bonds of the alkyl side chain. PynA subsequently forms the amide bond between the acyl chain and L-serine. Although pynA has a terminal reductase domain, it appears to require the thioesterase pynI for the release of the straight-chain intermediate from pynA via the formation of a tetramic acid pyranonigrin J. The methyltransferase pynC then coverts pyranonigrin J to pyranonigrin I via N-methylation. The FAD-dependent monooxygenase pynG catalyzes an epoxidation-mediated cyclization to form the dihydro-gamma-pyrone moiety, followed by pynD-catalyzed oxidation of the alcohol to the ketone and enolization to yield the characteristic tetramic acid-fused gamma-pyrone core of pyranonigrin H. Pyranonigrin H is substrate of pynH for dehydration-mediated exo-methylene formation from the serine side chain to produce pyranonigrin E, before the oxidase pynE reduces the exo-methylene of pyranonigrin E into a pendant methyl to form pyranonigrin G. The FAD-linked oxidoreductase pynB performs the reverse reaction and converts pyranonigrin G back to pyranonigrin E. The protein is Hybrid PKS-NRPS synthetase pynA of Aspergillus niger (strain ATCC MYA-4892 / CBS 513.88 / FGSC A1513).